The primary structure comprises 370 residues: Phospho-2-dehydro-3-deoxyheptonate aldolase, tyrosine-inhibited (370 aa).

This sequence belongs to the class-I DAHP synthase family.

It carries out the reaction D-erythrose 4-phosphate + phosphoenolpyruvate + H2O = 7-phospho-2-dehydro-3-deoxy-D-arabino-heptonate + phosphate. The protein operates within metabolic intermediate biosynthesis; chorismate biosynthesis; chorismate from D-erythrose 4-phosphate and phosphoenolpyruvate: step 1/7. Its activity is regulated as follows. Inhibited by tyrosine. In terms of biological role, stereospecific condensation of phosphoenolpyruvate (PEP) and D-erythrose-4-phosphate (E4P) giving rise to 3-deoxy-D-arabino-heptulosonate-7-phosphate (DAHP). The sequence is that of Phospho-2-dehydro-3-deoxyheptonate aldolase, tyrosine-inhibited (ARO4) from Candida albicans (strain SC5314 / ATCC MYA-2876) (Yeast).